The primary structure comprises 234 residues: Golgi SNAP receptor complex member 1 (234 aa).

Over 1-212 (MSETWEALRK…MQKIKTKKQK (212 aa)) the chain is Cytoplasmic. Positions 54–121 (VTTEIEGLIE…RDNVDQVLQR (68 aa)) form a coiled coil. Residues 213–233 (NTMILAGVISACLIFTIFWII) form a helical; Anchor for type IV membrane protein membrane-spanning segment. N234 is a topological domain (vesicular).

This sequence belongs to the GOSR1 family. As to quaternary structure, component of several multiprotein Golgi SNARE complexes.

It localises to the golgi apparatus membrane. Functionally, involved in transport from the ER to the Golgi apparatus as well as in intra-Golgi transport. It belongs to a super-family of proteins called t-SNAREs or soluble NSF (N-ethylmaleimide-sensitive factor) attachment protein receptor. Cooperates with ykt-6 for proper expression of Golgi-resident proteins. Required along with ykt-6 for normal embryonic development, seam cell division or differentiation, and ray formation. The polypeptide is Golgi SNAP receptor complex member 1 (Caenorhabditis briggsae).